Consider the following 61-residue polypeptide: MRCLPVFVILLLLIASTPSVDARAKTRDDMSLASFHDDAKRILQILQDRSGCCVIDSNCCG.

Residues 1–22 form the signal peptide; it reads MRCLPVFVILLLLIASTPSVDA. A propeptide spanning residues 23-48 is cleaved from the precursor; it reads RAKTRDDMSLASFHDDAKRILQILQD. Position 60 is a cysteine amide (Cys60).

This sequence belongs to the conotoxin T superfamily. In terms of processing, contains 2 disulfide bonds that can be either 'C1-C3, C2-C4' or 'C1-C4, C2-C3', since these disulfide connectivities have been observed for conotoxins with cysteine framework V (for examples, see AC P0DQQ7 and AC P81755). As to expression, expressed by the venom duct.

The protein localises to the secreted. This Conus textile (Cloth-of-gold cone) protein is Conotoxin Tx-D021.